The sequence spans 303 residues: Elongation factor Ts (303 aa).

The interval 81-84 is involved in Mg(2+) ion dislocation from EF-Tu; it reads TDFV.

This sequence belongs to the EF-Ts family.

The protein localises to the cytoplasm. In terms of biological role, associates with the EF-Tu.GDP complex and induces the exchange of GDP to GTP. It remains bound to the aminoacyl-tRNA.EF-Tu.GTP complex up to the GTP hydrolysis stage on the ribosome. This chain is Elongation factor Ts, found in Mesomycoplasma hyopneumoniae (strain 232) (Mycoplasma hyopneumoniae).